A 245-amino-acid polypeptide reads, in one-letter code: Probable histone chaperone asf-1-like protein (245 aa).

The segment covering glutamate 157–glutamate 166 has biased composition (acidic residues). Positions glutamate 157 to histidine 245 are disordered. The span at glutamate 167–aspartate 183 shows a compositional bias: basic and acidic residues. Residues glycine 184–leucine 206 show a composition bias toward acidic residues. Positions alanine 215–histidine 245 are enriched in basic and acidic residues.

Belongs to the ASF1 family. As to quaternary structure, interacts with histone H3 and histone H4.

The protein localises to the nucleus. Histone chaperone that facilitates histone deposition and histone exchange and removal during nucleosome assembly and disassembly. This Caenorhabditis elegans protein is Probable histone chaperone asf-1-like protein (asfl-1).